The sequence spans 2290 residues: Armadillo repeat-containing X-linked protein 4 (2290 aa).

A helical membrane pass occupies residues 7–24 (VGWVTAGLVIWAGTCYYI). Disordered stretches follow at residues 517–549 (QGEA…TCTQ), 564–583 (SRVD…TKAD), 967–988 (KVRG…VGSA), 1014–1087 (AVPK…ACRK), 1302–1430 (GSWA…ANSG), 1521–1715 (GSWG…RSED), 1911–1931 (SNTF…AGDN), and 1954–1973 (NENT…KSSE). Residues 526–536 (GKARGKAKAKC) show a composition bias toward basic residues. The segment covering 1073–1087 (TSESEGGSGTQACRK) has biased composition (polar residues). Composition is skewed to gly residues over residues 1328-1341 (SWAG…GGSM) and 1403-1414 (AGAGGQAGGGSK). The span at 1419–1430 (DQSSGRSWANSG) shows a compositional bias: polar residues. Positions 1521–1535 (GSWGGASGQDVGGSR) are enriched in gly residues. The span at 1537–1558 (GPTNQSSAGSWDSPGSQVSGSC) shows a compositional bias: polar residues. Gly residues-rich tracts occupy residues 1581-1598 (IGGG…GGSR) and 1609-1623 (GSWG…GGAR). A compositionally biased stretch (polar residues) spans 1628 to 1645 (DQSSGGSWAGTGNQSSGR). The span at 1674–1687 (GAGSQASGESWAGS) shows a compositional bias: low complexity. ARM repeat units follow at residues 2031 to 2071 (RCKH…NSAD), 2073 to 2112 (SYSH…NISV), 2153 to 2192 (ITSE…NFSK), and 2194 to 2234 (PSMT…NINY).

The protein belongs to the eutherian X-chromosome-specific Armcx family.

The protein resides in the membrane. This is Armadillo repeat-containing X-linked protein 4 (ARMCX4) from Homo sapiens (Human).